Consider the following 80-residue polypeptide: RNA-binding protein Hfq (80 aa).

A Sm domain is found at 10 to 70; that stretch reads DLFLNTVRKQ…ISTIMPGQPL (61 aa).

The protein belongs to the Hfq family. In terms of assembly, homohexamer.

RNA chaperone that binds small regulatory RNA (sRNAs) and mRNAs to facilitate mRNA translational regulation in response to envelope stress, environmental stress and changes in metabolite concentrations. Also binds with high specificity to tRNAs. The sequence is that of RNA-binding protein Hfq from Rhizobium meliloti (strain 1021) (Ensifer meliloti).